The chain runs to 299 residues: Acetylglutamate kinase (299 aa).

Substrate contacts are provided by residues 72–73 (GG), Arg-94, and Asn-196.

It belongs to the acetylglutamate kinase family. ArgB subfamily.

The protein resides in the cytoplasm. The catalysed reaction is N-acetyl-L-glutamate + ATP = N-acetyl-L-glutamyl 5-phosphate + ADP. It functions in the pathway amino-acid biosynthesis; L-arginine biosynthesis; N(2)-acetyl-L-ornithine from L-glutamate: step 2/4. Functionally, catalyzes the ATP-dependent phosphorylation of N-acetyl-L-glutamate. This chain is Acetylglutamate kinase, found in Burkholderia mallei (strain NCTC 10247).